The sequence spans 188 residues: uncharacterized protein (188 aa).

A disordered region spans residues 133–153 (PKGRPTMKLQYPKMPPKPKTR).

This sequence belongs to the IS150/IS1296 orfA family.

This is an uncharacterized protein from Haemophilus influenzae (strain ATCC 51907 / DSM 11121 / KW20 / Rd).